A 127-amino-acid polypeptide reads, in one-letter code: Fatty acid-binding protein, liver (127 aa).

M1 carries the post-translational modification N-acetylmethionine. At S11 the chain carries Phosphoserine. N6-succinyllysine is present on residues K31 and K36. S39 is subject to Phosphoserine. K46 is subject to N6-succinyllysine. Phosphothreonine is present on T51. S56 carries the phosphoserine modification. 3 positions are modified to N6-succinyllysine: K57, K78, and K90. At S100 the chain carries Phosphoserine. K121 bears the N6-succinyllysine mark.

The protein belongs to the calycin superfamily. Fatty-acid binding protein (FABP) family. As to quaternary structure, monomer.

It is found in the cytoplasm. Functionally, plays a role in lipoprotein-mediated cholesterol uptake in hepatocytes. Binds cholesterol. Binds free fatty acids and their coenzyme A derivatives, bilirubin, and some other small molecules in the cytoplasm. May be involved in intracellular lipid transport. The sequence is that of Fatty acid-binding protein, liver (FABP1) from Sus scrofa (Pig).